Consider the following 349-residue polypeptide: Insulin gene enhancer protein isl-1 (349 aa).

2 LIM zinc-binding domains span residues 17–70 (CVGC…CKRD) and 79–133 (CAKC…RADH). Residues 181 to 240 (TTRVRTVLNEKQLHTLRTCYNANPRPDALMKEQLVEMTGLSPRVIRVWFQNKRCKDKKRS) constitute a DNA-binding region (homeobox). The interval 312-349 (VNFSEGGPGSNSTGSEVASMSSQLPDTPNSMVASPIEA) is disordered. A compositionally biased stretch (polar residues) spans 321–343 (SNSTGSEVASMSSQLPDTPNSMV).

Its subcellular location is the nucleus. In terms of biological role, DNA-binding transcriptional activator. Recognizes and binds to the consensus octamer binding site 5'-ATAATTAA-3' in promoter of target genes. Plays a fundamental role in the gene regulatory network essential for retinal ganglion cell (RGC) differentiation. May be involved in subtype specialization of primary motoneurons. May bind to insulin gene enhancer sequences. Essential for heart development. This chain is Insulin gene enhancer protein isl-1 (isl1), found in Danio rerio (Zebrafish).